Consider the following 209-residue polypeptide: Holliday junction branch migration complex subunit RuvA (209 aa).

The tract at residues 1-70 (MINYLKGKTT…EDQQILYGFS (70 aa)) is domain I. The tract at residues 71 to 149 (TDSERDLFRQ…QWEQAIALKT (79 aa)) is domain II. Residues 150-160 (PVSVGVPSREI) are flexible linker. The tract at residues 160–209 (ILEEVEMTLLALGYTDEEIDQAISAISQDNLLLKNPHVEEWLKSAIAWLS) is domain III.

It belongs to the RuvA family. Homotetramer. Forms an RuvA(8)-RuvB(12)-Holliday junction (HJ) complex. HJ DNA is sandwiched between 2 RuvA tetramers; dsDNA enters through RuvA and exits via RuvB. An RuvB hexamer assembles on each DNA strand where it exits the tetramer. Each RuvB hexamer is contacted by two RuvA subunits (via domain III) on 2 adjacent RuvB subunits; this complex drives branch migration. In the full resolvosome a probable DNA-RuvA(4)-RuvB(12)-RuvC(2) complex forms which resolves the HJ.

The protein resides in the cytoplasm. Its function is as follows. The RuvA-RuvB-RuvC complex processes Holliday junction (HJ) DNA during genetic recombination and DNA repair, while the RuvA-RuvB complex plays an important role in the rescue of blocked DNA replication forks via replication fork reversal (RFR). RuvA specifically binds to HJ cruciform DNA, conferring on it an open structure. The RuvB hexamer acts as an ATP-dependent pump, pulling dsDNA into and through the RuvAB complex. HJ branch migration allows RuvC to scan DNA until it finds its consensus sequence, where it cleaves and resolves the cruciform DNA. The protein is Holliday junction branch migration complex subunit RuvA of Gloeothece citriformis (strain PCC 7424) (Cyanothece sp. (strain PCC 7424)).